A 493-amino-acid chain; its full sequence is Transcript termination protein A18 (493 aa).

A Helicase ATP-binding domain is found at 100 to 256 (MIELKRPLYI…NSIINIAKLS (157 aa)). 113–120 (LACGFGKT) serves as a coordination point for ATP. The DESH box signature appears at 206–209 (DESH).

The protein belongs to the helicase family. Poxviruses subfamily. In terms of assembly, interacts with G2. Might be part of a transcription complex composed at least of G2, A18, and H5.

Its subcellular location is the virion. In terms of biological role, DNA helicase which seems to act as a postreplicative transcription termination factor. Involved in ATP-dependent release of nascent RNA. Forms a stable complex with single-stranded DNA, and to a lesser extent RNA. In Cowpox virus (strain GRI-90 / Grishak) (CPV), this protein is Transcript termination protein A18.